The following is a 193-amino-acid chain: Allatostatin A (193 aa).

A signal peptide spans 1-25 (MKTSSLIAMRLIIFYLLSVVGRSTA). Residues 26 to 64 (AVEEAPASSLHIPRLNPLSSNLEYDEPSEKRAYAYISEY) constitute a propeptide that is removed on maturation. I74 is subject to Isoleucine amide. The propeptide occupies 78–84 (WIDNSED). Isoleucine amide is present on residues I94 and I105. Positions 109–139 (NSGYRPLGMDFSVDNMDFHSREDNLDDFIDD) are excised as a propeptide. Residue I150 is modified to Isoleucine amide. A Serine amide modification is found at S165. Residues 169–193 (LNDVVGPKYLLGLGKGLSENENLIQ) constitute a propeptide that is removed on maturation.

Belongs to the allatostatin family. As to expression, allatostatins A1, A2 and A3 are expressed in brain, antennal lobes, optical lobes, gnathal ganglia, the retrocerebral complex and thoracic, abdominal and ventral ganglia. Allatostain A4 is expressed in brain (at protein level).

The protein resides in the secreted. In terms of biological role, may act as a neurotransmitter or neuromodulator. This is Allatostatin A from Camponotus floridanus (Florida carpenter ant).